We begin with the raw amino-acid sequence, 75 residues long: MRRDKKRSRKRVCSFCVDKIEQVDYKDVNRLRRYISERGKILPRRISGNCAHHQRQLTRAIKRARALALLPYTAE.

Belongs to the bacterial ribosomal protein bS18 family. In terms of assembly, part of the 30S ribosomal subunit. Forms a tight heterodimer with protein bS6.

Binds as a heterodimer with protein bS6 to the central domain of the 16S rRNA, where it helps stabilize the platform of the 30S subunit. This chain is Small ribosomal subunit protein bS18, found in Moorella thermoacetica (strain ATCC 39073 / JCM 9320).